The primary structure comprises 496 residues: ATP synthase subunit beta 1 (496 aa).

167–174 contributes to the ATP binding site; the sequence is GGAGVGKT. The disordered stretch occupies residues 474–496; that stretch reads REAAAAQQSTAQQAAPAEKEPAA. Low complexity predominate over residues 476–489; the sequence is AAAAQQSTAQQAAP.

The protein belongs to the ATPase alpha/beta chains family. F-type ATPases have 2 components, CF(1) - the catalytic core - and CF(0) - the membrane proton channel. CF(1) has five subunits: alpha(3), beta(3), gamma(1), delta(1), epsilon(1). CF(0) has three main subunits: a(1), b(2) and c(9-12). The alpha and beta chains form an alternating ring which encloses part of the gamma chain. CF(1) is attached to CF(0) by a central stalk formed by the gamma and epsilon chains, while a peripheral stalk is formed by the delta and b chains.

It is found in the cell inner membrane. It catalyses the reaction ATP + H2O + 4 H(+)(in) = ADP + phosphate + 5 H(+)(out). Functionally, produces ATP from ADP in the presence of a proton gradient across the membrane. The catalytic sites are hosted primarily by the beta subunits. The protein is ATP synthase subunit beta 1 of Paraburkholderia xenovorans (strain LB400).